We begin with the raw amino-acid sequence, 305 residues long: Hepatitis A virus cellular receptor 1 homolog (305 aa).

Residues Met1–Ser21 form the signal peptide. Positions Tyr22–Thr122 constitute an Ig-like V-type domain. Residues Tyr22–Gly237 are Extracellular-facing. Cystine bridges form between Cys37/Cys108, Cys49/Cys60, and Cys55/Cys107. Residues Pro129–Thr185 form a disordered region. Low complexity-rich tracts occupy residues Pro139 to Thr152 and Pro161 to Thr177. A glycan (N-linked (GlcNAc...) asparagine) is linked at Asn208. A helical transmembrane segment spans residues Phe238 to Ile258. The Cytoplasmic portion of the chain corresponds to Thr259–Pro305.

Belongs to the immunoglobulin superfamily. TIM family. Interacts with STAM. Interacts with SELPLG. Expressed by stimulated T-cells. Expressed during primary antigen stimulation. Expressed at higher levels on B rather than T-cells, both constitutively and after activation.

It localises to the cell membrane. Phosphatidylserine receptor that plays an important functional role in regulatory B-cells homeostasis including generation, expansion and suppressor functions. As P-selectin/SELPLG ligand, plays a specialized role in activated but not naive T-cell trafficking during inflammatory responses. Controls thereby T-cell accumulation in the inflamed central nervous system (CNS) and the induction of autoimmune disease. Also regulates expression of various anti-inflammatory cytokines and co-inhibitory ligands including IL10. Acts as a regulator of T-cell proliferation. May play a role in kidney injury and repair. In Mus musculus (Mouse), this protein is Hepatitis A virus cellular receptor 1 homolog (Havcr1).